Reading from the N-terminus, the 593-residue chain is Eukaryotic peptide chain release factor subunit 1 (593 aa).

It belongs to the eukaryotic release factor 1 family. In terms of assembly, heterodimer of two subunits, one of which binds GTP.

The protein resides in the cytoplasm. Functionally, directs the termination of nascent peptide synthesis (translation) in response to the termination codons UAA, UAG and UGA. This is Eukaryotic peptide chain release factor subunit 1 from Caenorhabditis elegans.